We begin with the raw amino-acid sequence, 40 residues long: Photosystem II reaction center protein J (40 aa).

A helical transmembrane segment spans residues 8-28 (IPLWLIGTVAGIPVIGSVGVF).

This sequence belongs to the PsbJ family. As to quaternary structure, PSII is composed of 1 copy each of membrane proteins PsbA, PsbB, PsbC, PsbD, PsbE, PsbF, PsbH, PsbI, PsbJ, PsbK, PsbL, PsbM, PsbT, PsbX, PsbY, PsbZ, Psb30/Ycf12, at least 3 peripheral proteins of the oxygen-evolving complex and a large number of cofactors. It forms dimeric complexes.

The protein resides in the plastid. It localises to the chloroplast thylakoid membrane. Functionally, one of the components of the core complex of photosystem II (PSII). PSII is a light-driven water:plastoquinone oxidoreductase that uses light energy to abstract electrons from H(2)O, generating O(2) and a proton gradient subsequently used for ATP formation. It consists of a core antenna complex that captures photons, and an electron transfer chain that converts photonic excitation into a charge separation. The protein is Photosystem II reaction center protein J of Acorus calamus (Sweet flag).